We begin with the raw amino-acid sequence, 60 residues long: Large ribosomal subunit protein bL32 (60 aa).

This sequence belongs to the bacterial ribosomal protein bL32 family.

This is Large ribosomal subunit protein bL32 from Paramagnetospirillum magneticum (strain ATCC 700264 / AMB-1) (Magnetospirillum magneticum).